Here is a 226-residue protein sequence, read N- to C-terminus: Enolase-phosphatase E1 (226 aa).

The protein belongs to the HAD-like hydrolase superfamily. MasA/MtnC family. Monomer. Requires Mg(2+) as cofactor.

The catalysed reaction is 5-methylsulfanyl-2,3-dioxopentyl phosphate + H2O = 1,2-dihydroxy-5-(methylsulfanyl)pent-1-en-3-one + phosphate. It participates in amino-acid biosynthesis; L-methionine biosynthesis via salvage pathway; L-methionine from S-methyl-5-thio-alpha-D-ribose 1-phosphate: step 3/6. It functions in the pathway amino-acid biosynthesis; L-methionine biosynthesis via salvage pathway; L-methionine from S-methyl-5-thio-alpha-D-ribose 1-phosphate: step 4/6. In terms of biological role, bifunctional enzyme that catalyzes the enolization of 2,3-diketo-5-methylthiopentyl-1-phosphate (DK-MTP-1-P) into the intermediate 2-hydroxy-3-keto-5-methylthiopentenyl-1-phosphate (HK-MTPenyl-1-P), which is then dephosphorylated to form the acireductone 1,2-dihydroxy-3-keto-5-methylthiopentene (DHK-MTPene). The protein is Enolase-phosphatase E1 of Shewanella oneidensis (strain ATCC 700550 / JCM 31522 / CIP 106686 / LMG 19005 / NCIMB 14063 / MR-1).